Consider the following 334-residue polypeptide: Cell division protein ZipA (334 aa).

Residues 1 to 2 (ME) are Periplasmic-facing. Residues 3–23 (LHIIFLILGGLLIVLLAGFSI) traverse the membrane as a helical segment. Over 24-334 (YSARREKSRI…DRQAYFARVS (311 aa)) the chain is Cytoplasmic.

The protein belongs to the ZipA family. In terms of assembly, interacts with FtsZ via their C-terminal domains.

The protein localises to the cell inner membrane. In terms of biological role, essential cell division protein that stabilizes the FtsZ protofilaments by cross-linking them and that serves as a cytoplasmic membrane anchor for the Z ring. Also required for the recruitment to the septal ring of downstream cell division proteins. The sequence is that of Cell division protein ZipA from Haemophilus ducreyi (strain 35000HP / ATCC 700724).